Here is a 705-residue protein sequence, read N- to C-terminus: Dolichyl-diphosphooligosaccharide--protein glycosyltransferase subunit STT3A (705 aa).

Residues Met1–Leu17 lie on the Cytoplasmic side of the membrane. Residues Leu18–Val38 form a helical membrane-spanning segment. The Lumenal portion of the chain corresponds to Leu39–Leu119. The short motif at Glu47–Asp49 is the DXD motif 1 element. Asp49 contributes to the Mn(2+) binding site. A helical membrane pass occupies residues Ala120–Leu138. The Cytoplasmic portion of the chain corresponds to Lys139–Asp140. Residues Ala141–Ile158 form a helical membrane-spanning segment. Topologically, residues Ser159–Glu169 are lumenal. 2 residues coordinate Mn(2+): Asp167 and Glu169. A DXD motif 2 motif is present at residues Asp167–Glu169. Residues Gly170–Thr189 traverse the membrane as a helical segment. Residues Gly190 to Ser191 are Cytoplasmic-facing. A helical membrane pass occupies residues Ile192–Val206. Residues Ser207–Gly211 are Lumenal-facing. Residues Tyr212 to Leu228 traverse the membrane as a helical segment. The Cytoplasmic segment spans residues Thr229–Ser233. The chain crosses the membrane as a helical span at residues His234–Phe259. At Gln260–His267 the chain is on the lumenal side. A helical membrane pass occupies residues Met268–Arg287. Over Ser288–Arg300 the chain is Cytoplasmic. The chain crosses the membrane as a helical span at residues Ser301–Gly321. At Lys322–Thr356 the chain is on the lumenal side. The SVSE motif motif lies at Ser348 to Glu351. A helical transmembrane segment spans residues Trp357 to Phe379. Residues Ser380–Ala385 are Cytoplasmic-facing. The helical transmembrane segment at Arg386–Val402 threads the bilayer. The Lumenal portion of the chain corresponds to Met403–Leu406. Position 405 (Arg405) interacts with dolichyl diphosphooligosaccharide. Residues Met407 to Thr428 traverse the membrane as a helical segment. Topologically, residues Tyr429 to Lys453 are cytoplasmic. Residues Asn454–Phe473 form a helical membrane-spanning segment. Over His474–Thr705 the chain is Lumenal. The interacts with target acceptor peptide in protein substrate stretch occupies residues Trp525–Asp527. The WWDYG motif motif lies at Trp525 to Gly529. Tyr530 contacts dolichyl diphosphooligosaccharide. 2 N-linked (GlcNAc...) asparagine glycosylation sites follow: Asn537 and Asn544. N-linked (GlcNAc...) (high mannose) asparagine glycosylation is present at Asn548. The short motif at Asp592–Met599 is the DK motif element.

This sequence belongs to the STT3 family. As to quaternary structure, component of the oligosaccharyltransferase (OST) complex. There are 2 OST complexes, OST-A and OST-B, which contain STT3A or STT3B as catalytic subunit, respectively. OST-A and OST-B contain common core subunits RPN1, RPN2, OST48, OST4, DAD1 and TMEM258, and OST-A contains DC2/OSTC and KRTCAP2/KCP2 specific accessory subunits. OST-A complex assembly occurs through the formation of 3 subcomplexes. Subcomplex 1 contains RPN1 and TMEM258, subcomplex 2 contains the OST-A-specific subunits STT3A, DC2/OSTC, and KCP2 as well as the core subunit OST4, and subcomplex 3 contains RPN2, DAD1, and OST48. The OST-A complex can form stable complexes with the Sec61 complex or with both the Sec61 and TRAP complexes. It depends on Mg(2+) as a cofactor. Requires Mn(2+) as cofactor.

It is found in the endoplasmic reticulum membrane. It catalyses the reaction a di-trans,poly-cis-dolichyl diphosphooligosaccharide + L-asparaginyl-[protein] = N(4)-(oligosaccharide-(1-&gt;4)-N-acetyl-beta-D-glucosaminyl-(1-&gt;4)-N-acetyl-beta-D-glucosaminyl)-L-asparaginyl-[protein] + a di-trans,poly-cis-dolichyl diphosphate + H(+). The protein operates within protein modification; protein glycosylation. Catalytic subunit of the oligosaccharyl transferase (OST) complex that catalyzes the initial transfer of a defined glycan (Glc(3)Man(9)GlcNAc(2) in eukaryotes) from the lipid carrier dolichol-pyrophosphate to an asparagine residue within an Asn-X-Ser/Thr consensus motif in nascent polypeptide chains, the first step in protein N-glycosylation. N-glycosylation occurs cotranslationally and the complex associates with the Sec61 complex at the channel-forming translocon complex that mediates protein translocation across the endoplasmic reticulum (ER). All subunits are required for a maximal enzyme activity. This subunit contains the active site and the acceptor peptide and donor lipid-linked oligosaccharide (LLO) binding pockets. STT3A is present in the majority of OST complexes and mediates cotranslational N-glycosylation of most sites on target proteins, while STT3B-containing complexes are required for efficient post-translational glycosylation and mediate glycosylation of sites that have been skipped by STT3A. STT3A-containing OST-A complex is also required to prevent hyperglycosylation of some target proteins by preventing glycosylation of facultative sites before folding of target proteins is completed. This is Dolichyl-diphosphooligosaccharide--protein glycosyltransferase subunit STT3A from Bos taurus (Bovine).